The chain runs to 102 residues: NADH-quinone oxidoreductase subunit K (102 aa).

3 helical membrane-spanning segments follow: residues 6-26, 30-50, and 62-82; these read LEHG…GLMV, ILFV…AFVV, and VMFI…LAIL.

Belongs to the complex I subunit 4L family. As to quaternary structure, NDH-1 is composed of 13 different subunits. Subunits NuoA, H, J, K, L, M, N constitute the membrane sector of the complex.

It localises to the cell inner membrane. The catalysed reaction is a quinone + NADH + 5 H(+)(in) = a quinol + NAD(+) + 4 H(+)(out). NDH-1 shuttles electrons from NADH, via FMN and iron-sulfur (Fe-S) centers, to quinones in the respiratory chain. The immediate electron acceptor for the enzyme in this species is believed to be ubiquinone. Couples the redox reaction to proton translocation (for every two electrons transferred, four hydrogen ions are translocated across the cytoplasmic membrane), and thus conserves the redox energy in a proton gradient. The polypeptide is NADH-quinone oxidoreductase subunit K (Pseudomonas syringae pv. tomato (strain ATCC BAA-871 / DC3000)).